Reading from the N-terminus, the 742-residue chain is Photosystem I P700 chlorophyll a apoprotein A2 (742 aa).

A run of 8 helical transmembrane segments spans residues 46 to 69 (LFST…FHIA), 135 to 158 (LFQA…LHLQ), 175 to 199 (LNHH…HVAI), 273 to 291 (IAHH…GHMY), 336 to 359 (LHFQ…QHMG), 375 to 401 (SALY…IFFV), 423 to 445 (ALIS…IYVH), and 525 to 543 (FLVH…LILI). [4Fe-4S] cluster contacts are provided by Cys-567 and Cys-576. The next 2 membrane-spanning stretches (helical) occupy residues 583 to 604 (AMYL…YWHW) and 651 to 673 (LSVW…MFLI). Divinyl chlorophyll a is bound by residues His-662, Met-670, and Tyr-678. A phylloquinone-binding site is contributed by Trp-679. Residues 715–735 (LVGLAHFTIGNILTFGAFVIA) traverse the membrane as a helical segment.

It belongs to the PsaA/PsaB family. The PsaA/B heterodimer binds the P700 divinyl chlorophyll special pair and subsequent electron acceptors. PSI consists of a core antenna complex that captures photons, and an electron transfer chain that converts photonic excitation into a charge separation. The cyanobacterial PSI reaction center is composed of one copy each of PsaA,B,C,D,E,F,I,J,K,L,M and X, and forms trimeric complexes. It depends on PSI electron transfer chain: 5 divinyl chlorophyll a, 1 divinyl chlorophyll a', 2 phylloquinones and 3 4Fe-4S clusters. PSI core antenna: 90 divinyl chlorophyll a, 22 carotenoids, 3 phospholipids and 1 galactolipid. P700 is a divinyl chlorophyll a/divinyl chlorophyll a' dimer, A0 is one or more divinyl chlorophyll a, A1 is one or both phylloquinones and FX is a shared 4Fe-4S iron-sulfur center. as a cofactor.

Its subcellular location is the cellular thylakoid membrane. It catalyses the reaction reduced [plastocyanin] + hnu + oxidized [2Fe-2S]-[ferredoxin] = oxidized [plastocyanin] + reduced [2Fe-2S]-[ferredoxin]. Its function is as follows. PsaA and PsaB bind P700, the primary electron donor of photosystem I (PSI), as well as the electron acceptors A0, A1 and FX. PSI is a plastocyanin/cytochrome c6-ferredoxin oxidoreductase, converting photonic excitation into a charge separation, which transfers an electron from the donor P700 chlorophyll pair to the spectroscopically characterized acceptors A0, A1, FX, FA and FB in turn. Oxidized P700 is reduced on the lumenal side of the thylakoid membrane by plastocyanin or cytochrome c6. The protein is Photosystem I P700 chlorophyll a apoprotein A2 of Prochlorococcus marinus (strain MIT 9515).